We begin with the raw amino-acid sequence, 89 residues long: Small ribosomal subunit protein uS14 (89 aa).

The interval 32–51 (DYEGLQKLPKNSSPVRLHNR) is disordered.

Belongs to the universal ribosomal protein uS14 family. Part of the 30S ribosomal subunit. Contacts proteins S3 and S10.

In terms of biological role, binds 16S rRNA, required for the assembly of 30S particles and may also be responsible for determining the conformation of the 16S rRNA at the A site. This is Small ribosomal subunit protein uS14 from Christiangramia forsetii (strain DSM 17595 / CGMCC 1.15422 / KT0803) (Gramella forsetii).